A 305-amino-acid chain; its full sequence is Sulfate adenylyltransferase subunit 2 1 (305 aa).

Residues 283–305 (RSGRAIDHDQAGSMERKKREGYF) are disordered.

The protein belongs to the PAPS reductase family. CysD subfamily. As to quaternary structure, heterodimer composed of CysD, the smaller subunit, and CysN.

The catalysed reaction is sulfate + ATP + H(+) = adenosine 5'-phosphosulfate + diphosphate. Its pathway is sulfur metabolism; hydrogen sulfide biosynthesis; sulfite from sulfate: step 1/3. In terms of biological role, with CysN forms the ATP sulfurylase (ATPS) that catalyzes the adenylation of sulfate producing adenosine 5'-phosphosulfate (APS) and diphosphate, the first enzymatic step in sulfur assimilation pathway. APS synthesis involves the formation of a high-energy phosphoric-sulfuric acid anhydride bond driven by GTP hydrolysis by CysN coupled to ATP hydrolysis by CysD. This is Sulfate adenylyltransferase subunit 2 1 from Chromohalobacter salexigens (strain ATCC BAA-138 / DSM 3043 / CIP 106854 / NCIMB 13768 / 1H11).